We begin with the raw amino-acid sequence, 344 residues long: TATA box-binding protein-like 2 (344 aa).

Residues 78 to 143 (NKDRTVTGNK…SNQLSSETPN (66 aa)) form a disordered region. Residues 110-120 (GSGLNLNSNSS) show a composition bias toward low complexity. The segment covering 134–143 (SNQLSSETPN) has biased composition (polar residues).

The protein belongs to the TBP family. In terms of assembly, interacts with TAF3.

It is found in the cytoplasm. The protein resides in the nucleus. Functionally, transcription factor required in complex with TAF3 for the differentiation of myoblasts into myocytes. The complex replaces TFIID at specific promoters at an early stage in the differentiation process. This Rattus norvegicus (Rat) protein is TATA box-binding protein-like 2.